Here is a 523-residue protein sequence, read N- to C-terminus: La-related protein 1C (523 aa).

A compositionally biased stretch (low complexity) spans 1 to 16; the sequence is MASATSNNPASSSMSP. Disordered regions lie at residues 1–52 and 95–313; these read MASA…VRGE and AAGD…VRHP. An N-acetylalanine modification is found at A2. Residues 22-31 show a composition bias toward polar residues; sequence NHGSPTASVA. Low complexity-rich tracts occupy residues 32 to 44 and 146 to 169; these read QSPRRPSRQVSSP and SNKSSSDSLKSLGDVPSSSSASSS. Residue S33 is modified to Phosphoserine. 2 stretches are compositionally biased toward polar residues: residues 206–270 and 282–305; these read QRNG…NGNH and HGNQNWTFQRSFNGREGNAQSQRG. The region spanning 363 to 452 is the HTH La-type RNA-binding domain; that stretch reads HYQDPPLHMK…RDNWQNWVLR (90 aa). A disordered region spans residues 474-523; the sequence is GNLSVDQSSADPIGGSSSQLQPTEALSDDQQQSSSTAPVSNHNAPDGANR. Residues 477-516 are compositionally biased toward polar residues; that stretch reads SVDQSSADPIGGSSSQLQPTEALSDDQQQSSSTAPVSNHN.

Belongs to the LARP family. In terms of tissue distribution, age-dependent accumulation in rosette leaves.

It localises to the cytoplasm. Promotes leaf senescence mediated by abscisic acid (ABA), salicylic acid (SA) and jasmonic acid (MeJA), probably though the induction of expression of senescence-associated genes (SAGs) and defense-related genes. This is La-related protein 1C (LARP1C) from Arabidopsis thaliana (Mouse-ear cress).